The chain runs to 289 residues: Formamidopyrimidine-DNA glycosylase (289 aa).

Catalysis depends on Pro2, which acts as the Schiff-base intermediate with DNA. Glu3 functions as the Proton donor in the catalytic mechanism. Lys61 functions as the Proton donor; for beta-elimination activity in the catalytic mechanism. DNA contacts are provided by His97, Arg119, and Lys168. An FPG-type zinc finger spans residues 254–288; that stretch reads NAYGRAGKPCPRCGEPIVRVQWTNRSSHFCPQCQS. Residue Arg278 is the Proton donor; for delta-elimination activity of the active site.

The protein belongs to the FPG family. As to quaternary structure, monomer. Zn(2+) serves as cofactor.

It carries out the reaction Hydrolysis of DNA containing ring-opened 7-methylguanine residues, releasing 2,6-diamino-4-hydroxy-5-(N-methyl)formamidopyrimidine.. It catalyses the reaction 2'-deoxyribonucleotide-(2'-deoxyribose 5'-phosphate)-2'-deoxyribonucleotide-DNA = a 3'-end 2'-deoxyribonucleotide-(2,3-dehydro-2,3-deoxyribose 5'-phosphate)-DNA + a 5'-end 5'-phospho-2'-deoxyribonucleoside-DNA + H(+). In terms of biological role, involved in base excision repair of DNA damaged by oxidation or by mutagenic agents. Acts as a DNA glycosylase that recognizes and removes damaged bases. Has a preference for oxidized purines, such as 7,8-dihydro-8-oxoguanine (8-oxoG). Has AP (apurinic/apyrimidinic) lyase activity and introduces nicks in the DNA strand. Cleaves the DNA backbone by beta-delta elimination to generate a single-strand break at the site of the removed base with both 3'- and 5'-phosphates. The polypeptide is Formamidopyrimidine-DNA glycosylase (Corynebacterium urealyticum (strain ATCC 43042 / DSM 7109)).